A 62-amino-acid polypeptide reads, in one-letter code: Cytotoxin 11 (62 aa).

Disulfide bonds link cysteine 3-cysteine 22, cysteine 15-cysteine 40, cysteine 44-cysteine 55, and cysteine 56-cysteine 61.

The protein belongs to the three-finger toxin family. Short-chain subfamily. Orphan group XV sub-subfamily. Expressed by the venom gland.

Its subcellular location is the secreted. The protein resides in the target cell membrane. Its function is as follows. Has low cytotoxic activity. This Naja annulifera (Banded Egyptian cobra) protein is Cytotoxin 11.